Reading from the N-terminus, the 426-residue chain is Glutamate-1-semialdehyde 2,1-aminomutase (426 aa).

The residue at position 265 (Lys-265) is an N6-(pyridoxal phosphate)lysine.

The protein belongs to the class-III pyridoxal-phosphate-dependent aminotransferase family. HemL subfamily. Homodimer. Pyridoxal 5'-phosphate is required as a cofactor.

Its subcellular location is the cytoplasm. The catalysed reaction is (S)-4-amino-5-oxopentanoate = 5-aminolevulinate. It functions in the pathway porphyrin-containing compound metabolism; protoporphyrin-IX biosynthesis; 5-aminolevulinate from L-glutamyl-tRNA(Glu): step 2/2. The chain is Glutamate-1-semialdehyde 2,1-aminomutase from Methylococcus capsulatus (strain ATCC 33009 / NCIMB 11132 / Bath).